A 77-amino-acid chain; its full sequence is UPF0291 protein OB1671 (77 aa).

Positions 56-77 (DPEGKDVTPQKLRDYQDRNKKH) are disordered. A compositionally biased stretch (basic and acidic residues) spans 57–77 (PEGKDVTPQKLRDYQDRNKKH).

It belongs to the UPF0291 family.

The protein resides in the cytoplasm. This Oceanobacillus iheyensis (strain DSM 14371 / CIP 107618 / JCM 11309 / KCTC 3954 / HTE831) protein is UPF0291 protein OB1671.